Consider the following 243-residue polypeptide: Venom nerve growth factor 1 (243 aa).

The first 18 residues, 1 to 18 (MSMLCYTLIIAFLIGIWA), serve as a signal peptide directing secretion. A propeptide spanning residues 19–125 (APKSEDNVPL…TLNRNIRAKR (107 aa)) is cleaved from the precursor. A compositionally biased stretch (basic and acidic residues) spans 47–66 (GLKTSRNTDQRHPAPKKAED). A disordered region spans residues 47–69 (GLKTSRNTDQRHPAPKKAEDQEL). 3 cysteine pairs are disulfide-bonded: Cys139-Cys204, Cys182-Cys232, and Cys192-Cys234. N-linked (GlcNAc...) asparagine glycosylation occurs at Asn148.

It belongs to the NGF-beta family. As to quaternary structure, homodimer; non-covalently linked. As to expression, expressed by the venom gland.

Its subcellular location is the secreted. In terms of biological role, nerve growth factor is important for the development and maintenance of the sympathetic and sensory nervous systems. It stimulates division and differentiation of sympathetic and embryonic sensory neurons as well as basal forebrain cholinergic neurons in the brain. Its relevance in the snake venom is not clear. However, it has been shown to inhibit metalloproteinase-dependent proteolysis of platelet glycoprotein Ib alpha, suggesting a metalloproteinase inhibition to prevent metalloprotease autodigestion and/or protection against prey proteases. Binds a lipid between the two protein chains in the homodimer. The lipid-bound form promotes histamine relase from mouse mast cells, contrary to the lipid-free form. The chain is Venom nerve growth factor 1 from Oxyuranus microlepidotus (Inland taipan).